The following is a 1004-amino-acid chain: MFVRIGFVVAASIAAVTVKRLNVKPSKPSKPSDNGEGGDKEQSVDPDYNLNDKNLQEEEEEEEEEVKLINSVINQTRGSFSDYLDDDILPEFEDLLSGEIEYPLPDDDNNLEKAEKERKYEVEMAYNDGELERLKQLVKELEEREVKLEGELLEYYGLKEQESDIVELQRQLKIKTVEIDMLNITINSLQAERKKLQEELSQNGIVRKELEVARNKIKELQRQIQLDANQTKGQLLLLKQHVSSLQMKEEEAMNKDTEVERKLKAVQDLEVQVMELKRKNRELQHEKRELSIKLDSAEARIATLSNMTESDKVAKVREEVNNLKHNNEDLLKQVEGLQMNRFSEVEELVYLRWVNACLRYELRNYQTPAGKISARDLSKNLSPKSQAKAKRLMLEYAGSERGQGDTDLESNYSQPSSPGSDDFDNASMDSSTSRFSSFSKKPGLIQKLKKWGKSKDDSSVQSSPSRSFYGGSPGRLSSSMNKQRGPLESLMIRNAGESVAITTFGQVDQESPGTPETPNLPRIRTQQQASSPGEGLNSVAASFHVMSKSVDNVLDEKYPAYKDRHKLAVEREKHIKHKADQARAERFGGNVALPPKLAQLKEKRVVVPSVITATGDQSNESNESNEGKASENAATVTKMKLVDIEKRPPRVPRPPPRSAGGGKSTNLPSARPPLPGGGPPPPPPPPGGGPPPPPGGGPPPPPPPPGALGRGAGGGNKVHRAPELVEFYQSLMKRESKKEGAPSLISSGTGNSSAARNNMIGEIENRSTFLLAVKADVETQGDFVQSLATEVRASSFTDIEDLLAFVSWLDEELSFLVDERAVLKHFDWPEGKADALREAAFEYQDLMKLEKQVTSFVDDPNLSCEPALKKMYKLLEKVEQSVYALLRTRDMAISRYKEFGIPVDWLSDTGVVGKIKLSSVQLAKKYMKRVAYELDSVSGSDKDPNREFLLLQGVRFAFRVHQFAGGFDAESMKAFEELRSRAKTESGDNNNNNNNNSNEEESVN.

The segment at 1–25 (MFVRIGFVVAASIAAVTVKRLNVKP) is required for chloroplast localization. The disordered stretch occupies residues 22-63 (NVKPSKPSKPSDNGEGGDKEQSVDPDYNLNDKNLQEEEEEEE). Positions 123–341 (EMAYNDGELE…KQVEGLQMNR (219 aa)) form a coiled coil. A leucine-zipper 1 region spans residues 269–290 (LEVQVMELKRKNRELQHEKREL). Disordered stretches follow at residues 398–482 (GSER…SMNK), 504–536 (FGQV…GEGL), 612–718 (TATG…GNKV), and 736–755 (SKKE…SSAA). Serine 399 bears the Phosphoserine mark. The segment covering 409 to 419 (ESNYSQPSSPG) has biased composition (polar residues). Residues 427-439 (SMDSSTSRFSSFS) are compositionally biased toward low complexity. Composition is skewed to polar residues over residues 504–517 (FGQV…TPET) and 612–624 (TATG…SNES). A compositionally biased stretch (pro residues) spans 670-706 (ARPPLPGGGPPPPPPPPGGGPPPPPGGGPPPPPPPPG). The span at 744–755 (LISSGTGNSSAA) shows a compositional bias: polar residues. Residues 802–823 (LLAFVSWLDEELSFLVDERAVL) are leucine-zipper 2. The interval 979-1004 (RSRAKTESGDNNNNNNNNSNEEESVN) is disordered.

Expressed in cauline leaves, rosette leaves, stems and flowers, but not in roots.

Its subcellular location is the plastid. It is found in the chloroplast outer membrane. In terms of biological role, required for the positioning and movement of chloroplasts. Interacts with profilin and actin independent of its polymerization status. Regulates chloroplast localization by anchoring chloroplasts to the plasma membrane and forming a bridge to the actin cytoskeleton. The chain is Protein CHUP1, chloroplastic (CHUP1) from Arabidopsis thaliana (Mouse-ear cress).